We begin with the raw amino-acid sequence, 498 residues long: NAD(P)H-quinone oxidoreductase chain 4, chloroplastic (498 aa).

14 consecutive transmembrane segments (helical) span residues 4–24, 37–57, 87–107, 111–131, 134–154, 167–187, 207–227, 242–262, 274–294, 305–325, 331–351, 386–406, 417–437, and 461–481; these read LPWL…IPLL, LGIC…QFHL, MGLI…AWPV, VRLF…LFAS, ILLF…LLSM, FLLY…TMGL, IAVE…KLPI, HYST…YGLI, FLFS…ASLI, IAYS…SITD, AILQ…LAGI, LALP…GIVT, IILF…LSML, and IFIS…PNLV.

Belongs to the complex I subunit 4 family.

Its subcellular location is the plastid. It localises to the chloroplast thylakoid membrane. It carries out the reaction a plastoquinone + NADH + (n+1) H(+)(in) = a plastoquinol + NAD(+) + n H(+)(out). The catalysed reaction is a plastoquinone + NADPH + (n+1) H(+)(in) = a plastoquinol + NADP(+) + n H(+)(out). The protein is NAD(P)H-quinone oxidoreductase chain 4, chloroplastic of Psilotum nudum (Whisk fern).